Reading from the N-terminus, the 282-residue chain is Putative glycosyltransferase HI_0765 (282 aa).

It belongs to the glycosyltransferase 25 family.

This Haemophilus influenzae (strain ATCC 51907 / DSM 11121 / KW20 / Rd) protein is Putative glycosyltransferase HI_0765.